The primary structure comprises 392 residues: Lipid-A-disaccharide synthase (392 aa).

Belongs to the LpxB family.

The catalysed reaction is a lipid X + a UDP-2-N,3-O-bis[(3R)-3-hydroxyacyl]-alpha-D-glucosamine = a lipid A disaccharide + UDP + H(+). Its pathway is bacterial outer membrane biogenesis; LPS lipid A biosynthesis. In terms of biological role, condensation of UDP-2,3-diacylglucosamine and 2,3-diacylglucosamine-1-phosphate to form lipid A disaccharide, a precursor of lipid A, a phosphorylated glycolipid that anchors the lipopolysaccharide to the outer membrane of the cell. The polypeptide is Lipid-A-disaccharide synthase (Syntrophotalea carbinolica (strain DSM 2380 / NBRC 103641 / GraBd1) (Pelobacter carbinolicus)).